Here is a 229-residue protein sequence, read N- to C-terminus: Heptaprenylglyceryl phosphate synthase (229 aa).

Lys-12 contacts sn-glycerol 1-phosphate. Mg(2+)-binding residues include Asp-14 and Ser-40. Sn-glycerol 1-phosphate is bound by residues 159–164, Gly-189, and 209–210; these read YLEYSG and GN.

This sequence belongs to the GGGP/HepGP synthase family. Group I subfamily. Homodimer. Mg(2+) serves as cofactor.

It catalyses the reaction sn-glycerol 1-phosphate + all-trans-heptaprenyl diphosphate = 3-heptaprenyl-sn-glycero-1-phosphate + diphosphate. It functions in the pathway membrane lipid metabolism; glycerophospholipid metabolism. Functionally, prenyltransferase that catalyzes in vivo the transfer of the heptaprenyl moiety of heptaprenyl pyrophosphate (HepPP; 35 carbon atoms) to the C3 hydroxyl of sn-glycerol-1-phosphate (G1P), producing heptaprenylglyceryl phosphate (HepGP). This reaction is an ether-bond-formation step in the biosynthesis of archaea-type G1P-based membrane lipids found in Bacillales. This Bacillus cereus (strain ZK / E33L) protein is Heptaprenylglyceryl phosphate synthase.